The primary structure comprises 220 residues: Protein GrpE (220 aa).

Composition is skewed to polar residues over residues 1–12 (MEQGDKQATYNE) and 50–63 (AAST…QTSV). The interval 1–67 (MEQGDKQATY…AEQTSVEAEE (67 aa)) is disordered.

The protein belongs to the GrpE family. As to quaternary structure, homodimer.

It is found in the cytoplasm. Functionally, participates actively in the response to hyperosmotic and heat shock by preventing the aggregation of stress-denatured proteins, in association with DnaK and GrpE. It is the nucleotide exchange factor for DnaK and may function as a thermosensor. Unfolded proteins bind initially to DnaJ; upon interaction with the DnaJ-bound protein, DnaK hydrolyzes its bound ATP, resulting in the formation of a stable complex. GrpE releases ADP from DnaK; ATP binding to DnaK triggers the release of the substrate protein, thus completing the reaction cycle. Several rounds of ATP-dependent interactions between DnaJ, DnaK and GrpE are required for fully efficient folding. The chain is Protein GrpE from Geobacillus thermodenitrificans (strain NG80-2).